The sequence spans 251 residues: NADPH-dependent oxidoreductase (251 aa).

This sequence belongs to the flavin oxidoreductase frp family. It depends on FMN as a cofactor.

Its function is as follows. Reduces FMN, organic nitro compounds and disulfide DTNB. Involved in maintenance of the cellular redox state and the disulfide stress response. This Staphylococcus haemolyticus (strain JCSC1435) protein is NADPH-dependent oxidoreductase (nfrA).